The chain runs to 375 residues: Fluoride export protein 1 (375 aa).

Over 1–11 (MIFNPVISNHK) the chain is Cytoplasmic. A helical membrane pass occupies residues 12–32 (LSHYIHVFCTFTTFCILGTET). At 33-34 (RQ) the chain is on the extracellular side. A helical membrane pass occupies residues 35–55 (AITALSTYTPAFVTAPTVLWS). Residues 56-79 (NCSSCMLMGIMQSLNAYTWMKDHQ) are Cytoplasmic-facing. A helical membrane pass occupies residues 80-100 (VLFLGVTTGYCGALSSFSSML). Topologically, residues 101–127 (LEMFEHSTNLTNGNIANHTKLPNRAYG) are extracellular. 2 N-linked (GlcNAc...) asparagine glycosylation sites follow: Asn-109 and Asn-117. Residues 128–148 (IMEFLSVLLVHLMVSMGSLIF) traverse the membrane as a helical segment. Over 149 to 213 (GRQLGKEVIV…FKKFFDIVDK (65 aa)) the chain is Cytoplasmic. The helical transmembrane segment at 214–234 (LAYALAFPLIILFVVLCAYYE) threads the bilayer. Asn-235 carries N-linked (GlcNAc...) asparagine glycosylation. Residues 235–241 (NYSRGKW) lie on the Extracellular side of the membrane. Residues 242–262 (TLPCLFGIFAGFLRYWLAEMF) traverse the membrane as a helical segment. Residues 263-268 (NKTNKK) are Cytoplasmic-facing. The helical transmembrane segment at 269–289 (FPLGTFLANVFATLLIGIFTM) threads the bilayer. Topologically, residues 290-310 (VQRGKKHFSTDVPIVNSLNSC) are extracellular. Residues 311 to 331 (HIVSALISGFCGTLSTISTFI) form a helical membrane-spanning segment. At 332 to 338 (NEGYKLS) the chain is on the cytoplasmic side. The helical transmembrane segment at 339–359 (FINMLIYYTVSIAISYCLLVI) threads the bilayer. Residues 360–375 (TLGSYAWTRGLTNPIC) are Extracellular-facing.

The protein belongs to the fluoride channel Fluc/FEX (TC 1.A.43) family.

The protein resides in the cell membrane. The enzyme catalyses fluoride(in) = fluoride(out). Fluoride channel required for the rapid expulsion of cytoplasmic fluoride. The protein is Fluoride export protein 1 of Saccharomyces cerevisiae (strain ATCC 204508 / S288c) (Baker's yeast).